Here is an 884-residue protein sequence, read N- to C-terminus: Protein translocase subunit SecA (884 aa).

ATP-binding positions include Q82, 100 to 104 (GEGKT), and D491.

This sequence belongs to the SecA family.

Its subcellular location is the plastid. The protein localises to the chloroplast stroma. It is found in the chloroplast thylakoid membrane. It carries out the reaction ATP + H2O + cellular proteinSide 1 = ADP + phosphate + cellular proteinSide 2.. Functionally, has a central role in coupling the hydrolysis of ATP to the transfer of proteins across the thylakoid membrane. This Olisthodiscus luteus (Marine phytoflagellate) protein is Protein translocase subunit SecA.